The chain runs to 406 residues: Formate-dependent phosphoribosylglycinamide formyltransferase (406 aa).

Residues 27 to 28 (EL) and Glu-87 each bind N(1)-(5-phospho-beta-D-ribosyl)glycinamide. ATP-binding positions include Arg-120, Lys-162, 167–172 (SSGKGQ), 202–205 (EGFI), and Glu-210. The ATP-grasp domain maps to 125–320 (RLAAETLGLP…EFELHARALL (196 aa)). Residues Glu-279 and Glu-291 each coordinate Mg(2+). N(1)-(5-phospho-beta-D-ribosyl)glycinamide is bound by residues Asp-298, Lys-367, and 374–375 (RR).

Belongs to the PurK/PurT family. In terms of assembly, homodimer.

The enzyme catalyses N(1)-(5-phospho-beta-D-ribosyl)glycinamide + formate + ATP = N(2)-formyl-N(1)-(5-phospho-beta-D-ribosyl)glycinamide + ADP + phosphate + H(+). Its pathway is purine metabolism; IMP biosynthesis via de novo pathway; N(2)-formyl-N(1)-(5-phospho-D-ribosyl)glycinamide from N(1)-(5-phospho-D-ribosyl)glycinamide (formate route): step 1/1. Its function is as follows. Involved in the de novo purine biosynthesis. Catalyzes the transfer of formate to 5-phospho-ribosyl-glycinamide (GAR), producing 5-phospho-ribosyl-N-formylglycinamide (FGAR). Formate is provided by PurU via hydrolysis of 10-formyl-tetrahydrofolate. The protein is Formate-dependent phosphoribosylglycinamide formyltransferase of Bordetella parapertussis (strain 12822 / ATCC BAA-587 / NCTC 13253).